Consider the following 773-residue polypeptide: Cadherin-5 (773 aa).

The first 18 residues, 1-18, serve as a signal peptide directing secretion; that stretch reads MKKLILLFSLFLAPAFSY. Residues 19-40 constitute a propeptide that is removed on maturation; that stretch reads KENQKINQNFSSNNTSHKRLKR. 3 N-linked (GlcNAc...) asparagine glycosylation sites follow: asparagine 27, asparagine 31, and asparagine 32. 5 Cadherin domains span residues 39 to 144, 145 to 251, 252 to 366, 367 to 474, and 474 to 582; these read KRDW…APIF, VQKI…FPVF, KHPS…PPVF, TKLS…APEL, and LVYP…DFTF. Topologically, residues 41–595 are extracellular; sequence DWIWNRMHIR…RAKQVGVSVQ (555 aa). The Ca(2+) site is built by glutamate 51, glutamate 52, aspartate 102, and glutamate 104. A glycan (N-linked (GlcNAc...) asparagine) is linked at asparagine 121. Ca(2+)-binding residues include aspartate 136, isoleucine 137, asparagine 138, aspartate 139, and asparagine 140. N-linked (GlcNAc...) asparagine glycosylation is present at asparagine 150. Aspartate 170, aspartate 172, histidine 179, and aspartate 224 together coordinate Ca(2+). Residues asparagine 263, asparagine 437, asparagine 519, and asparagine 531 are each glycosylated (N-linked (GlcNAc...) asparagine). The chain crosses the membrane as a helical span at residues 596 to 617; the sequence is ALVAIFICIFTIIAVIALLILL. Residues 618 to 773 lie on the Cytoplasmic side of the membrane; the sequence is RKRHKKDLSG…GSEPNEDFVY (156 aa).

N-glycosylated. Post-translationally, O-glycosylated.

The protein resides in the cell junction. Its subcellular location is the adherens junction. It localises to the cell membrane. The protein localises to the cytoplasm. Functionally, cadherins are calcium-dependent cell adhesion proteins. They preferentially interact with themselves in a homophilic manner in connecting cells; cadherins may thus contribute to the sorting of heterogeneous cell types. This cadherin may play a important role in endothelial cell biology through control of the cohesion and organization of the intercellular junctions. Plays a role in coupling actin fibers to cell junctions in endothelial cells. Associates with CTNND1/p120-catenin to control CADH5 endocytosis. The polypeptide is Cadherin-5 (Gallus gallus (Chicken)).